The primary structure comprises 268 residues: Undecaprenyl-diphosphatase (268 aa).

6 helical membrane-spanning segments follow: residues 39 to 59 (SETFNIFIQLGAVLAVCLIYK), 75 to 95 (LPYFLKLSVAFIITSILGLWV), 106 to 126 (LGPVIIAIFGGAFWIYFTEKV), 179 to 199 (TEFAFLLGIPTMFAASLFAWI), 214 to 234 (LTLATGFCVSAVVAFISVKWL), and 243 to 263 (FIPFVWYRVGLGFFLIALVAL).

The protein belongs to the UppP family.

It is found in the cell inner membrane. It catalyses the reaction di-trans,octa-cis-undecaprenyl diphosphate + H2O = di-trans,octa-cis-undecaprenyl phosphate + phosphate + H(+). In terms of biological role, catalyzes the dephosphorylation of undecaprenyl diphosphate (UPP). Confers resistance to bacitracin. The chain is Undecaprenyl-diphosphatase from Methylacidiphilum infernorum (isolate V4) (Methylokorus infernorum (strain V4)).